Consider the following 176-residue polypeptide: ATP-dependent protease subunit HslV (176 aa).

Thr-5 is an active-site residue. Na(+) contacts are provided by Ala-161, Cys-164, and Thr-167.

It belongs to the peptidase T1B family. HslV subfamily. A double ring-shaped homohexamer of HslV is capped on each side by a ring-shaped HslU homohexamer. The assembly of the HslU/HslV complex is dependent on binding of ATP.

It is found in the cytoplasm. The enzyme catalyses ATP-dependent cleavage of peptide bonds with broad specificity.. With respect to regulation, allosterically activated by HslU binding. Functionally, protease subunit of a proteasome-like degradation complex believed to be a general protein degrading machinery. This chain is ATP-dependent protease subunit HslV, found in Pelotomaculum thermopropionicum (strain DSM 13744 / JCM 10971 / SI).